The primary structure comprises 447 residues: Cytochrome P450 BJ-4 (447 aa).

Residue C392 coordinates heme.

This sequence belongs to the cytochrome P450 family. Heme serves as cofactor.

Cytochromes P450 are a group of heme-thiolate monooxygenases. They oxidize a variety of structurally unrelated compounds, including steroids, fatty acids, and xenobiotics. This Bradyrhizobium diazoefficiens (strain JCM 10833 / BCRC 13528 / IAM 13628 / NBRC 14792 / USDA 110) protein is Cytochrome P450 BJ-4 (cyp117).